We begin with the raw amino-acid sequence, 382 residues long: Galactokinase (382 aa).

Residue 34-37 participates in substrate binding; the sequence is EHTD. 124–130 serves as a coordination point for ATP; it reads GAGLSSS. 2 residues coordinate Mg(2+): S130 and E162. Residue D174 is the Proton acceptor of the active site. Residue Y223 participates in substrate binding.

Belongs to the GHMP kinase family. GalK subfamily.

It localises to the cytoplasm. It carries out the reaction alpha-D-galactose + ATP = alpha-D-galactose 1-phosphate + ADP + H(+). It functions in the pathway carbohydrate metabolism; galactose metabolism. Functionally, catalyzes the transfer of the gamma-phosphate of ATP to D-galactose to form alpha-D-galactose-1-phosphate (Gal-1-P). The sequence is that of Galactokinase from Salmonella paratyphi C (strain RKS4594).